A 1156-amino-acid polypeptide reads, in one-letter code: Pre-mRNA-processing ATP-dependent RNA helicase PRP5 (1156 aa).

Basic and acidic residues-rich tracts occupy residues 1 to 12 and 71 to 92; these read MSGYDNRDDYRH and GHDR…HDSP. Disordered regions lie at residues 1 to 177, 216 to 337, and 351 to 390; these read MSGY…STGI, IASA…DEEE, and VAQV…GEAE. Positions 137–147 are enriched in polar residues; that stretch reads PTRSSLNTQLP. Over residues 152–165 the composition is skewed to pro residues; that stretch reads VAPPGMAPGPPPSL. 2 stretches are compositionally biased toward low complexity: residues 166–175 and 222–242; these read PSSTPIVPST and PSSQ…APTS. Over residues 252-267 the composition is skewed to polar residues; it reads SLRTDPSRTTAQNRSR. The segment covering 356–372 has biased composition (basic and acidic residues); the sequence is DDDRRKASASGGHERTQ. The Q motif signature appears at 476-504; the sequence is TKWSHCGLPASCLDVIKRLGYSAPTPIQS. Residues 507–685 enclose the Helicase ATP-binding domain; it reads MPAIMSGRDI…RKVLKNKPLE (179 aa). 520-527 is an ATP binding site; sequence AKTGSGKT. Positions 633–636 match the DEAD box motif; sequence DEAD. The 165-residue stretch at 697–861 folds into the Helicase C-terminal domain; sequence EIEQIVEVRS…HVPPELEAMA (165 aa). 2 disordered regions span residues 900 to 937 and 1028 to 1049; these read KSAY…SEDQ and ARKE…ARDP.

This sequence belongs to the DEAD box helicase family. DDX46/PRP5 subfamily.

It localises to the nucleus. The enzyme catalyses ATP + H2O = ADP + phosphate + H(+). In terms of biological role, ATP-dependent RNA helicase involved spliceosome assembly and in nuclear splicing. Catalyzes an ATP-dependent conformational change of U2 snRNP. Bridges U1 and U2 snRNPs and enables stable U2 snRNP association with intron RNA. This Mycosarcoma maydis (Corn smut fungus) protein is Pre-mRNA-processing ATP-dependent RNA helicase PRP5 (PRP5).